The sequence spans 284 residues: MLYSRESRTTVLFLALVTSLTVLCHSVDVTTVFTTSTITEITTVTAAPQPQNKAETALNTATNIIQTMQFLFNCAPFKWKGPLKITSCALNFIVLLLTAWGYLLKYLQENKLNSDADMEKMVGLGFGEMVGRIFGKGVGKAFTKMDITQKLVYPFEGSNRQKCLLMTVGENSIVPFHDLSTEICFDQYTLDSLSHHNHGSISILDAGSVSALGFADISSKMPSVSELYTLFGDYTIEVLGGITKLASTLNREDWQGERNGFAVLSRDRPNQTLLSVHMYSSSLL.

A signal peptide spans 1–24; that stretch reads MLYSRESRTTVLFLALVTSLTVLC. Over 25-84 the chain is Cytoplasmic; sequence HSVDVTTVFTTSTITEITTVTAAPQPQNKAETALNTATNIIQTMQFLFNCAPFKWKGPLK. Residues 85-104 traverse the membrane as a helical segment; that stretch reads ITSCALNFIVLLLTAWGYLL. The Extracellular segment spans residues 105-284; it reads KYLQENKLNS…SVHMYSSSLL (180 aa). N-linked (GlcNAc...) asparagine glycosylation is present at N270.

It to yeast YNL033w.

The protein localises to the cell membrane. This is an uncharacterized protein from Saccharomyces cerevisiae (strain ATCC 204508 / S288c) (Baker's yeast).